The chain runs to 852 residues: Translation initiation factor IF-2 (852 aa).

Residues 1–240 (MEDKNKTIKE…KTSSDKRDFS (240 aa)) form a disordered region. The span at 78–90 (KEVKYEESSRKQD) shows a compositional bias: basic and acidic residues. The span at 106 to 120 (VRPSGDSSYPVSRSP) shows a compositional bias: polar residues. The span at 150–200 (RGPGQGGGYQGNRGPGQGGGYQGNRGPGQQTGPGNRFGGSGPGNRSGGPGG) shows a compositional bias: gly residues. The span at 227 to 240 (HDKEKTSSDKRDFS) shows a compositional bias: basic and acidic residues. The 170-residue stretch at 347 to 516 (NRPPVVTIMG…LLQAEVMDLK (170 aa)) folds into the tr-type G domain. The tract at residues 356-363 (GHVDHGKT) is G1. 356–363 (GHVDHGKT) lines the GTP pocket. A G2 region spans residues 381–385 (GITQH). Positions 402 to 405 (DTPG) are G3. Residues 402–406 (DTPGH) and 456–459 (NKID) each bind GTP. Residues 456–459 (NKID) are G4. The interval 492–494 (SAR) is G5.

This sequence belongs to the TRAFAC class translation factor GTPase superfamily. Classic translation factor GTPase family. IF-2 subfamily.

It is found in the cytoplasm. Its function is as follows. One of the essential components for the initiation of protein synthesis. Protects formylmethionyl-tRNA from spontaneous hydrolysis and promotes its binding to the 30S ribosomal subunits. Also involved in the hydrolysis of GTP during the formation of the 70S ribosomal complex. The sequence is that of Translation initiation factor IF-2 from Leptospira borgpetersenii serovar Hardjo-bovis (strain JB197).